Here is a 718-residue protein sequence, read N- to C-terminus: MRAVLETADIAIVALYFILVMCIGFFAMWKSNRSTVSGYFLAGRSMTWVAIGASLFVSNIGSEHFIGLAGSGAASGFAVGAWEFNALLLLQLLGWVFIPIYIRSGVYTMPEYLSKRFGGHRIQVYFAALSLILYIFTKLSVDLYSGALFIQESMGWNLYVSVILLIGMTALLTVTGGLVAVIYTDTLQALLMIVGALTLMVISMMEIGGFEEVKRRYMLASPNVTSILLTYNLSNTNSCNVHPKKDALKMLRNPTDEDVPWPGFILGQTPASVWYWCADQVIVQRVLAAKNIAHAKGSTLMAGFLKLLPMFIIVVPGMISRILFADDIACINPEHCMQVCGSRAGCSNIAYPRLVMKLVPVGLRGLMMAVMIAALMSDLDSIFNSASTIFTLDVYKLIRKSASSRELMIVGRIFVAFMVVISIAWVPIIVEMQGGQMYLYIQEVADYLTPPVAALFLLAIFWKRCNEQGAFYGGMAGFILVVVRLTLAFAYRAPECDQPDNRPVFIKDIHYMYVATALFWITGLITVIVSLLTPPPTKEQIRTTTFWSKKSLVVKESCSPKDEPYKMQEKSILRCSENSEVINHVIPNGKSEDSIKGLQPEDVNLLVTCREEGNPVASLGHSEAETPVDAYSNGQAALMGEKERKKEAEDGSRYWKFIDWFCGFKSKSLSKRSLRDLMEEEAVCLQMLEEPPQVKVILNIGLFGVCSLGIFMFVYFSL.

Residues 1–9 lie on the Extracellular side of the membrane; it reads MRAVLETAD. The chain crosses the membrane as a helical span at residues 10 to 29; it reads IAIVALYFILVMCIGFFAMW. The Cytoplasmic portion of the chain corresponds to 30-38; the sequence is KSNRSTVSG. The helical transmembrane segment at 39–57 threads the bilayer; sequence YFLAGRSMTWVAIGASLFV. Residues 58 to 86 are Extracellular-facing; sequence SNIGSEHFIGLAGSGAASGFAVGAWEFNA. A helical membrane pass occupies residues 87-110; the sequence is LLLLQLLGWVFIPIYIRSGVYTMP. The Cytoplasmic segment spans residues 111–123; that stretch reads EYLSKRFGGHRIQ. A helical transmembrane segment spans residues 124–144; the sequence is VYFAALSLILYIFTKLSVDLY. Topologically, residues 145 to 157 are extracellular; that stretch reads SGALFIQESMGWN. The chain crosses the membrane as a helical span at residues 158 to 183; the sequence is LYVSVILLIGMTALLTVTGGLVAVIY. Residues 184–186 lie on the Cytoplasmic side of the membrane; it reads TDT. The chain crosses the membrane as a helical span at residues 187–205; sequence LQALLMIVGALTLMVISMM. Over 206-303 the chain is Extracellular; that stretch reads EIGGFEEVKR…HAKGSTLMAG (98 aa). A glycan (N-linked (GlcNAc...) asparagine) is linked at N232. Residues 304 to 324 form a helical membrane-spanning segment; it reads FLKLLPMFIIVVPGMISRILF. The Cytoplasmic portion of the chain corresponds to 325–353; sequence ADDIACINPEHCMQVCGSRAGCSNIAYPR. The helical transmembrane segment at 354–376 threads the bilayer; the sequence is LVMKLVPVGLRGLMMAVMIAALM. At 377–406 the chain is on the extracellular side; it reads SDLDSIFNSASTIFTLDVYKLIRKSASSRE. The chain crosses the membrane as a helical span at residues 407–430; sequence LMIVGRIFVAFMVVISIAWVPIIV. The Cytoplasmic portion of the chain corresponds to 431-443; it reads EMQGGQMYLYIQE. Residues 444 to 462 form a helical membrane-spanning segment; sequence VADYLTPPVAALFLLAIFW. At 463–510 the chain is on the extracellular side; sequence KRCNEQGAFYGGMAGFILVVVRLTLAFAYRAPECDQPDNRPVFIKDIH. A helical transmembrane segment spans residues 511-532; the sequence is YMYVATALFWITGLITVIVSLL. Residues 533-695 lie on the Cytoplasmic side of the membrane; that stretch reads TPPPTKEQIR…QMLEEPPQVK (163 aa). Residues S594 and S632 each carry the phosphoserine modification. The helical transmembrane segment at 696-716 threads the bilayer; that stretch reads VILNIGLFGVCSLGIFMFVYF. Topologically, residues 717–718 are extracellular; sequence SL.

Belongs to the sodium:solute symporter (SSF) (TC 2.A.21) family. In terms of assembly, interacts with KCNQ2 (via the pore module). Interacts with KCNQ1; this interaction is direct. Forms coregulatory complexes with ion channels KCNQ2-KCNQ3 and KCNQ1-KCNE2.

It localises to the apical cell membrane. The protein localises to the basolateral cell membrane. Electrogenic Na(+)-coupled sugar symporter that actively transports myo-inositol and its stereoisomer scyllo-inositol across the plasma membrane, with a Na(+) to sugar coupling ratio of 2:1. Maintains myo-inositol concentration gradient that defines cell volume and fluid balance during osmotic stress, in particular in the fetoplacental unit and central nervous system. Forms coregulatory complexes with voltage-gated K(+) ion channels, allosterically altering ion selectivity, voltage dependence and gating kinetics of the channel. In turn, K(+) efflux through the channel forms a local electrical gradient that modulates electrogenic Na(+)-coupled myo-inositol influx through the transporter. Associates with KCNQ1-KCNE2 channel in the apical membrane of choroid plexus epithelium and regulates the myo-inositol gradient between blood and cerebrospinal fluid with an impact on neuron excitability. Associates with KCNQ2-KCNQ3 channel altering ion selectivity, increasing Na(+) and Cs(+) permeation relative to K(+) permeation. Provides myo-inositol precursor for biosynthesis of phosphoinositides such as PI(4,5)P2, thus indirectly affecting the activity of phosphoinositide-dependent ion channels and Ca(2+) signaling upon osmotic stress. This is Sodium/myo-inositol cotransporter (SLC5A3) from Bos taurus (Bovine).